The chain runs to 684 residues: Fidgetin-like protein 2 (684 aa).

A compositionally biased stretch (polar residues) spans 27-41; it reads PEQHLDVSSTTSSPA. Disordered stretches follow at residues 27–48, 99–179, and 292–403; these read PEQH…ELYS, PGAF…PHSS, and LDEE…SDPM. The span at 160 to 179 shows a compositional bias: low complexity; sequence SNLSDSGYSGSSSCSGPHSS. Position 431 (alanine 431) interacts with ATP.

It belongs to the AAA ATPase family. It depends on Mg(2+) as a cofactor. In terms of tissue distribution, highly expressed in vascular endothelial cells and neuronal cells.

It is found in the cytoplasm. The protein localises to the cell cortex. It catalyses the reaction ATP + H2O = ADP + phosphate + H(+). Functionally, microtubule-severing enzyme that negatively regulates cell migration and wound healing. In migrating cells, targets dynamic microtubules (MTs) at the leading edge and severs them, thereby suppressing motility. Negative regulator of axon regeneration that suppresses axonal growth by selectively severing dynamic MTs in the distal axon shaft and growth cone. Contributes to proper cell branching during endothelial and neuronal development. The chain is Fidgetin-like protein 2 (fignl2) from Danio rerio (Zebrafish).